Consider the following 159-residue polypeptide: Na(+)/H(+) antiporter subunit E1 (159 aa).

Transmembrane regions (helical) follow at residues 1–21, 27–47, 49–69, and 101–121; these read MAIQIILNFILAFIWIFLSGS, LLLGFILGLGFVYLFSRILPG, FYFIKIYKILKLAVVFFVELL, and WQIVLLSNLITLTPGTVVLGI.

It belongs to the CPA3 antiporters (TC 2.A.63) subunit E family. As to quaternary structure, may form a heterooligomeric complex that consists of seven subunits: mnhA1, mnhB1, mnhC1, mnhD1, mnhE1, mnhF1 and mnhG1.

Its subcellular location is the cell membrane. Mnh complex is a Na(+)/H(+) antiporter involved in Na(+) excretion. This chain is Na(+)/H(+) antiporter subunit E1 (mnhE1), found in Staphylococcus haemolyticus (strain JCSC1435).